The chain runs to 1624 residues: Pappalysin-1 (1624 aa).

Residues 1-22 (MRLWSWVLRLGLLSAALGCGLA) form the signal peptide. A propeptide spanning residues 23–81 (ERPRRVRRDPRAVRPPRPAAGPATCATRAARGRRASPPPPPGGAWEAVRVPRRRQQRAA) is cleaved from the precursor. The disordered stretch occupies residues 28–93 (VRRDPRAVRP…AEEPSPPSRA (66 aa)). A compositionally biased stretch (low complexity) spans 42–51 (AGPATCATRA). Cystine bridges form between C141/C232, C324/C619, C329/C654, C411/C425, C421/C437, C454/C470, C471/C482, C580/C597, C584/C609, C707/C875, C710/C878, C750/C832, C772/C778, C944/C972, C957/C968, C980/C987, and C996/C1008. Residues 272-583 (RGLHTPLPQL…ISEIQSCSDP (312 aa)) are metalloprotease. N387 and N398 each carry an N-linked (GlcNAc...) asparagine glycan. N-linked (GlcNAc...) asparagine glycosylation is present at N426. Residue N516 is glycosylated (N-linked (GlcNAc...) asparagine). Residue H559 participates in Zn(2+) binding. The active site involves E560. Zn(2+) contacts are provided by H563 and H569. N-linked (GlcNAc...) asparagine glycosylation is found at N598, N616, and N722. N-linked (GlcNAc...) asparagine glycosylation occurs at N822. N1023 carries an N-linked (GlcNAc...) asparagine glycan. 19 cysteine pairs are disulfide-bonded: C1033–C1067, C1048–C1136, C1189–C1202, C1212–C1266, C1224–C1235, C1239–C1277, C1282–C1326, C1297–C1307, C1311–C1339, C1343–C1396, C1359–C1370, C1374–C1407, C1412–C1455, C1425–C1435, C1439–C1468, C1475–C1536, C1489–C1499, C1503–C1551, and C1555–C1573. 5 consecutive Sushi domains span residues 1210–1279 (ADCP…ACEP), 1280–1341 (VDCG…LCEL), 1342–1409 (MCLA…TCVP), 1410–1470 (VTCD…VCRE), and 1473–1553 (GQCS…HCVK). 2 N-linked (GlcNAc...) asparagine glycosylation sites follow: N1219 and N1223. The N-linked (GlcNAc...) asparagine glycan is linked to N1320. N1516 is a glycosylation site (N-linked (GlcNAc...) asparagine).

It belongs to the peptidase M43B family. In terms of assembly, homodimer; disulfide-linked. In pregnancy serum, predominantly found as a disulfide-linked 2:2 heterotetramer with the proform of PRG2. The cofactor is Zn(2+). Detected in kidney, spleen, brain, ovary, breast, skin, prostate, uterus, and placenta.

The protein localises to the secreted. It carries out the reaction Cleavage of the 135-Met-|-Lys-136 bond in insulin-like growth factor binding protein (IGFBP)-4, and the 143-Ser-|-Lys-144 bond in IGFBP-5.. Metalloproteinase which specifically cleaves IGFBP-4 and IGFBP-5, resulting in release of bound IGF. Cleavage of IGFBP-4 is dramatically enhanced by the presence of IGF, whereas cleavage of IGFBP-5 is slightly inhibited by the presence of IGF. Isoform 2 cleaves IGFBP-4 very slowly compared to PAPP-A, but its ability to cleave IGFBP-5 is unaffected. The polypeptide is Pappalysin-1 (Pappa) (Mus musculus (Mouse)).